The primary structure comprises 408 residues: DNA primase DnaG (408 aa).

The region spanning 171–250 is the Toprim domain; that stretch reads DAIIIVEGRA…AYSPRGKSVE (80 aa). Positions 177, 219, and 221 each coordinate Mg(2+). The disordered stretch occupies residues 276-323; that stretch reads AEENVERLPPSAAPAEVRAPAGAGRTSEGERPPRREWDSKPPSTLGEH. Residues 284 to 298 are compositionally biased toward low complexity; that stretch reads PPSAAPAEVRAPAGA. Positions 302 to 314 are enriched in basic and acidic residues; it reads SEGERPPRREWDS.

The protein belongs to the archaeal DnaG primase family. In terms of assembly, forms a ternary complex with MCM helicase and DNA. Mg(2+) is required as a cofactor.

The catalysed reaction is ssDNA + n NTP = ssDNA/pppN(pN)n-1 hybrid + (n-1) diphosphate.. Functionally, RNA polymerase that catalyzes the synthesis of short RNA molecules used as primers for DNA polymerase during DNA replication. The protein is DNA primase DnaG of Methanoculleus marisnigri (strain ATCC 35101 / DSM 1498 / JR1).